A 272-amino-acid chain; its full sequence is Probable proteasome subunit alpha type-6 (272 aa).

Low complexity predominate over residues 243–261; it reads AARASRAAAEEPQAPTAEA. Residues 243–272 are disordered; the sequence is AARASRAAAEEPQAPTAEAILDSADAMETD.

It belongs to the peptidase T1A family. The 26S proteasome consists of a 20S proteasome core and two 19S regulatory subunits. The 20S proteasome core is composed of 28 subunits that are arranged in four stacked rings, resulting in a barrel-shaped structure. The two end rings are each formed by seven alpha subunits, and the two central rings are each formed by seven beta subunits. The catalytic chamber with the active sites is on the inside of the barrel.

Its subcellular location is the cytoplasm. It is found in the nucleus. In terms of biological role, the proteasome is a multicatalytic proteinase complex which is characterized by its ability to cleave peptides with Arg, Phe, Tyr, Leu, and Glu adjacent to the leaving group at neutral or slightly basic pH. The proteasome has an ATP-dependent proteolytic activity. In Schizosaccharomyces pombe (strain 972 / ATCC 24843) (Fission yeast), this protein is Probable proteasome subunit alpha type-6.